The following is a 295-amino-acid chain: Protease HtpX (295 aa).

2 consecutive transmembrane segments (helical) span residues 4–24 and 42–62; these read ILLFLATNLAVVLIASITLSL and QLLVFCAVFGFAGSLFSLFIS. His147 serves as a coordination point for Zn(2+). Residue Glu148 is part of the active site. Zn(2+) is bound at residue His151. 2 helical membrane passes run 158 to 178 and 199 to 219; these read VTLALVQGVVNTFVMFFARII and ITTIFAELVLGFLASAIVMWF. Zn(2+) is bound at residue Glu224.

The protein belongs to the peptidase M48B family. Zn(2+) is required as a cofactor.

It localises to the cell inner membrane. The chain is Protease HtpX from Pseudomonas syringae pv. tomato (strain ATCC BAA-871 / DC3000).